A 117-amino-acid polypeptide reads, in one-letter code: UPF0102 protein Rsph17029_0461 (117 aa).

This sequence belongs to the UPF0102 family.

The polypeptide is UPF0102 protein Rsph17029_0461 (Cereibacter sphaeroides (strain ATCC 17029 / ATH 2.4.9) (Rhodobacter sphaeroides)).